Here is a 702-residue protein sequence, read N- to C-terminus: K(+)-insensitive pyrophosphate-energized proton pump (702 aa).

4 consecutive transmembrane segments (helical) span residues 3–23 (GIYL…ALTI), 63–83 (AVVF…GFLI), 130–150 (MLVA…LVGI), and 162–182 (VALG…GGIF). Lys-184 contacts substrate. The Mg(2+) site is built by Asp-187, Asp-191, Asn-214, and Asp-217. The next 6 membrane-spanning stretches (helical) occupy residues 234-254 (AVTV…VPAM), 255-275 (TSMM…SILG), 294-314 (GFLV…AIVP), 329-349 (GFDL…LIWV), 379-399 (GLAI…AAII), and 407-427 (LFGI…VVAL). Asp-435 contacts Mg(2+). 4 consecutive transmembrane segments (helical) span residues 466–486 (AVTK…LFAA), 517–537 (YVVV…SMGM), 586–606 (IIPS…ILGI), and 612–632 (AFSA…FVAI). Ca(2+) contacts are provided by Asp-642, Asp-668, and Asp-672. Lys-675 is a binding site for substrate.

This sequence belongs to the H(+)-translocating pyrophosphatase (TC 3.A.10) family. K(+)-insensitive subfamily. As to quaternary structure, homodimer. Requires Mg(2+) as cofactor.

The protein resides in the cell inner membrane. It carries out the reaction diphosphate + H2O + H(+)(in) = 2 phosphate + 2 H(+)(out). Proton pump that utilizes the energy of pyrophosphate hydrolysis as the driving force for proton movement across the membrane. Generates a proton motive force. The chain is K(+)-insensitive pyrophosphate-energized proton pump from Rhodospirillum rubrum (strain ATCC 11170 / ATH 1.1.1 / DSM 467 / LMG 4362 / NCIMB 8255 / S1).